A 280-amino-acid chain; its full sequence is Fructose-1,6-bisphosphatase class 1 (280 aa).

Mg(2+)-binding residues include glutamate 64, aspartate 83, leucine 85, and aspartate 86. Substrate is bound by residues 86 to 89 (DGSS), tyrosine 189, and lysine 220. Glutamate 226 contributes to the Mg(2+) binding site.

The protein belongs to the FBPase class 1 family. In terms of assembly, homotetramer. It depends on Mg(2+) as a cofactor.

The protein localises to the cytoplasm. The enzyme catalyses beta-D-fructose 1,6-bisphosphate + H2O = beta-D-fructose 6-phosphate + phosphate. Its pathway is carbohydrate biosynthesis; gluconeogenesis. The protein is Fructose-1,6-bisphosphatase class 1 of Campylobacter jejuni subsp. jejuni serotype O:23/36 (strain 81-176).